Here is a 969-residue protein sequence, read N- to C-terminus: GATOR2 complex protein Wdr59 (969 aa).

Residues 1 to 24 form a disordered region; sequence MPPTETLRPGERGTAGGPGAGAPE. 5 WD repeats span residues 127-167, 172-211, 215-255, 258-303, and 307-351; these read GHTR…KPAL, VCMS…CPTH, AHLN…RAEK, TTMS…DPIC, and GHTD…LKLC. T373 is modified (phosphothreonine). Positions 435 to 538 constitute an RWD domain; sequence HEFSLLNTNM…RALVAAMKKK (104 aa). Residues 891-911 form a C4-type zinc finger; it reads ECRKCAKPKRTPKCEPCKRPV. Zn(2+) is bound by residues C892, C895, C904, C907, C917, C928, H933, H936, H939, C950, C953, C955, and C957. The RING-type; atypical zinc finger occupies 912-960; sequence LFCVLCRLPVKGAANACLACGHGGHIDHMMQWFEKHNVCATCGCKCLER.

It belongs to the WD repeat WDR59 family. Component of the GATOR complex consisting of mio, Nup44A/Seh1, Im11, Nplr3, Nplr2, Wdr24, Wdr59 and Sec13. Within the GATOR complex, probable component of the GATOR2 subcomplex which is likely composed of mio, Nup44A/Seh1, Wdr24, Wdr59 and Sec13. The GATOR2 complex associates with unmet in the absence of S-adenosyl-L-methionine; the mio-Wdr24-Nup44A subcomplex is essential and sufficient for this interaction while Wdr59 and Sec13 are dispensable. This association acts as a nutrient sensor to inhibit mTORC1 signaling in the absence of methionine.

It is found in the lysosome membrane. A component of the GATOR complex, which functions as a regulator of the amino acid-sensing branch of the mTORC1 signaling pathway. The two GATOR subcomplexes, GATOR1 and GATOR2, regulate the mTORC1 pathway in order to mediate metabolic homeostasis, female gametogenesis and the response to amino acid limitation and complete starvation. GATOR2 activates the mTORC1 signaling pathway through the inhibition of the GATOR1 subcomplex, controlling the switch to cell proliferation and growth under nutrient replete conditions and during female oocyte development. Acts as an atypical component of the GATOR2 subcomplex, which can either promote or inhibit mTORC1 signaling, depending on tissues: inhibits mTORC1 activity by preventing the activity of GATOR2 in the ovary and the eye imaginal disk brain, while it promotes mTORC1 activity in the fat body. In Drosophila melanogaster (Fruit fly), this protein is GATOR2 complex protein Wdr59.